The primary structure comprises 167 residues: SsrA-binding protein (167 aa).

Residues His-144–Gln-167 form a disordered region. Positions Lys-146–Arg-160 are enriched in basic and acidic residues.

Belongs to the SmpB family.

The protein resides in the cytoplasm. In terms of biological role, required for rescue of stalled ribosomes mediated by trans-translation. Binds to transfer-messenger RNA (tmRNA), required for stable association of tmRNA with ribosomes. tmRNA and SmpB together mimic tRNA shape, replacing the anticodon stem-loop with SmpB. tmRNA is encoded by the ssrA gene; the 2 termini fold to resemble tRNA(Ala) and it encodes a 'tag peptide', a short internal open reading frame. During trans-translation Ala-aminoacylated tmRNA acts like a tRNA, entering the A-site of stalled ribosomes, displacing the stalled mRNA. The ribosome then switches to translate the ORF on the tmRNA; the nascent peptide is terminated with the 'tag peptide' encoded by the tmRNA and targeted for degradation. The ribosome is freed to recommence translation, which seems to be the essential function of trans-translation. The chain is SsrA-binding protein from Synechococcus sp. (strain CC9902).